Here is a 163-residue protein sequence, read N- to C-terminus: Nucleotide-binding protein MAV_4575 (163 aa).

It belongs to the YajQ family.

Functionally, nucleotide-binding protein. This chain is Nucleotide-binding protein MAV_4575, found in Mycobacterium avium (strain 104).